The sequence spans 208 residues: MARYTGPVCKLCRREGFKLYLKGERCFTPKCAVVKRPFAPGQHGSATRKLTQYGMQLRSKQALKRMYGVLEKQFRRYFEIASRKSEETGTALIKVLESRLDNVVYRMGFASSRKQARQLVSHGHVLVNGRKVNKASYSVRPGDIIEIKEKSKAKVPVKEAIEASRNRTTPPWLEIDFDAARGTFVRFPEREEVDIPVDLQSIIELYSK.

The 69-residue stretch at 98–166 folds into the S4 RNA-binding domain; the sequence is SRLDNVVYRM…VKEAIEASRN (69 aa).

This sequence belongs to the universal ribosomal protein uS4 family. Part of the 30S ribosomal subunit. Contacts protein S5. The interaction surface between S4 and S5 is involved in control of translational fidelity.

Functionally, one of the primary rRNA binding proteins, it binds directly to 16S rRNA where it nucleates assembly of the body of the 30S subunit. With S5 and S12 plays an important role in translational accuracy. The chain is Small ribosomal subunit protein uS4 from Kosmotoga olearia (strain ATCC BAA-1733 / DSM 21960 / TBF 19.5.1).